Reading from the N-terminus, the 299-residue chain is tRNA dimethylallyltransferase (299 aa).

An ATP-binding site is contributed by 13 to 20 (GPTASGKT). 15-20 (TASGKT) serves as a coordination point for substrate. Residues 38–41 (DSRQ) are interaction with substrate tRNA.

The protein belongs to the IPP transferase family. Monomer. It depends on Mg(2+) as a cofactor.

It catalyses the reaction adenosine(37) in tRNA + dimethylallyl diphosphate = N(6)-dimethylallyladenosine(37) in tRNA + diphosphate. In terms of biological role, catalyzes the transfer of a dimethylallyl group onto the adenine at position 37 in tRNAs that read codons beginning with uridine, leading to the formation of N6-(dimethylallyl)adenosine (i(6)A). In Prochlorococcus marinus (strain MIT 9313), this protein is tRNA dimethylallyltransferase.